Here is a 279-residue protein sequence, read N- to C-terminus: Reaction center protein L chain (279 aa).

Helical transmembrane passes span 33–56, 85–113, and 116–141; these read GFFG…GASQ, GLWQ…RKLG, and YHVP…ILMG. (7R,8Z)-bacteriochlorophyll b is bound by residues His-154 and His-174. The helical transmembrane segment at 171 to 200 threads the bilayer; that stretch reads NPAHMLAITFFFTTTLAMSMHGGLILSAAN. His-191 contributes to the Fe cation binding site. An a ubiquinone-binding site is contributed by Phe-217. The chain crosses the membrane as a helical span at residues 226–252; sequence GSLGIHRLGLFLALSAAFWSAVCIVIS. His-231 is a Fe cation binding site.

Belongs to the reaction center PufL/M/PsbA/D family. As to quaternary structure, reaction center is composed of four bacteriochlorophylls, two bacteriopheophytins, two ubiquinones, one iron, and three highly hydrophobic polypeptide chains (designated L, M, and H).

It is found in the cell inner membrane. Functionally, the reaction center is a membrane-bound complex that mediates the initial photochemical event in the electron transfer process of photosynthesis. This is Reaction center protein L chain (pufL) from Rubrivivax gelatinosus (Rhodocyclus gelatinosus).